The sequence spans 118 residues: Holo-[acyl-carrier-protein] synthase (118 aa).

Residues Asp5 and Glu51 each coordinate Mg(2+).

It belongs to the P-Pant transferase superfamily. AcpS family. Requires Mg(2+) as cofactor.

It is found in the cytoplasm. It catalyses the reaction apo-[ACP] + CoA = holo-[ACP] + adenosine 3',5'-bisphosphate + H(+). In terms of biological role, transfers the 4'-phosphopantetheine moiety from coenzyme A to a Ser of acyl-carrier-protein. In Helicobacter pylori (strain P12), this protein is Holo-[acyl-carrier-protein] synthase.